The following is a 312-amino-acid chain: Pre-mRNA-splicing factor 38A (312 aa).

The interval 1–179 (MANRTVKDAH…VLEETEQLDP (179 aa)) is N-terminal protein interaction domain. The disordered stretch occupies residues 180-312 (RVSALEEDMD…SHKKSRRGNE (133 aa)). Over residues 184-201 (LEEDMDDVESSEEEEDED) the composition is skewed to acidic residues. A compositionally biased stretch (basic and acidic residues) spans 202–223 (EKGRDPSPEHHRRNYRDLDRPR). 2 stretches are compositionally biased toward basic residues: residues 224–294 (RSPS…RSHS) and 301–312 (KKSHKKSRRGNE).

It belongs to the PRP38 family. As to quaternary structure, component of the spliceosome B complex.

It localises to the nucleus. Involved in pre-mRNA splicing as a component of the spliceosome. The polypeptide is Pre-mRNA-splicing factor 38A (prpf38a) (Xenopus tropicalis (Western clawed frog)).